The chain runs to 255 residues: Pimeloyl-[acyl-carrier protein] methyl ester esterase (255 aa).

The AB hydrolase-1 domain maps to 16-241 (LVLLHGWGLN…AAHAPFISHP (226 aa)). Residues Trp22, 81–82 (SL), and 142–146 (FLALQ) contribute to the substrate site. The Nucleophile role is filled by Ser81. Active-site residues include Asp206 and His234. His234 is a binding site for substrate.

This sequence belongs to the AB hydrolase superfamily. Carboxylesterase BioH family. In terms of assembly, monomer.

It localises to the cytoplasm. The enzyme catalyses 6-carboxyhexanoyl-[ACP] methyl ester + H2O = 6-carboxyhexanoyl-[ACP] + methanol + H(+). Its pathway is cofactor biosynthesis; biotin biosynthesis. In terms of biological role, the physiological role of BioH is to remove the methyl group introduced by BioC when the pimeloyl moiety is complete. It allows to synthesize pimeloyl-ACP via the fatty acid synthetic pathway through the hydrolysis of the ester bonds of pimeloyl-ACP esters. Also displays a weak thioesterase activity. Can form a complex with CoA, and may be involved in the condensation of CoA and pimelic acid into pimeloyl-CoA, a precursor in biotin biosynthesis. The protein is Pimeloyl-[acyl-carrier protein] methyl ester esterase of Serratia marcescens.